The sequence spans 205 residues: Holliday junction branch migration complex subunit RuvA (205 aa).

The domain I stretch occupies residues 1–64; it reads MIGKLKGSIE…EDQLKLFGFV (64 aa). Residues 65–143 form a domain II region; sequence SALEREWFNL…AFAGDASASI (79 aa). The flexible linker stretch occupies residues 144–153; the sequence is GLKQELGEGV. The interval 153-205 is domain III; sequence VASAPVADAVSALTNLGYSRDQAANAVAAALKNGGEGGDSAKLIRLGLKELSR.

This sequence belongs to the RuvA family. In terms of assembly, homotetramer. Forms an RuvA(8)-RuvB(12)-Holliday junction (HJ) complex. HJ DNA is sandwiched between 2 RuvA tetramers; dsDNA enters through RuvA and exits via RuvB. An RuvB hexamer assembles on each DNA strand where it exits the tetramer. Each RuvB hexamer is contacted by two RuvA subunits (via domain III) on 2 adjacent RuvB subunits; this complex drives branch migration. In the full resolvosome a probable DNA-RuvA(4)-RuvB(12)-RuvC(2) complex forms which resolves the HJ.

It is found in the cytoplasm. Its function is as follows. The RuvA-RuvB-RuvC complex processes Holliday junction (HJ) DNA during genetic recombination and DNA repair, while the RuvA-RuvB complex plays an important role in the rescue of blocked DNA replication forks via replication fork reversal (RFR). RuvA specifically binds to HJ cruciform DNA, conferring on it an open structure. The RuvB hexamer acts as an ATP-dependent pump, pulling dsDNA into and through the RuvAB complex. HJ branch migration allows RuvC to scan DNA until it finds its consensus sequence, where it cleaves and resolves the cruciform DNA. This chain is Holliday junction branch migration complex subunit RuvA, found in Agrobacterium fabrum (strain C58 / ATCC 33970) (Agrobacterium tumefaciens (strain C58)).